Here is a 643-residue protein sequence, read N- to C-terminus: Translation factor GUF1, mitochondrial (643 aa).

Residues 1–18 constitute a mitochondrion transit peptide; sequence MLASQAIKRIFHRSWKPL. Residues 43 to 226 form the tr-type G domain; sequence ENYRNFSIVA…AIIDRIPPPT (184 aa). GTP-binding positions include 52–59, 118–122, and 172–175; these read AHIDHGKS, DTPGH, and NKID.

Belongs to the TRAFAC class translation factor GTPase superfamily. Classic translation factor GTPase family. LepA subfamily.

It is found in the mitochondrion inner membrane. It catalyses the reaction GTP + H2O = GDP + phosphate + H(+). Promotes mitochondrial protein synthesis. May act as a fidelity factor of the translation reaction, by catalyzing a one-codon backward translocation of tRNAs on improperly translocated ribosomes. Binds to mitochondrial ribosomes in a GTP-dependent manner. The polypeptide is Translation factor GUF1, mitochondrial (Zygosaccharomyces rouxii (strain ATCC 2623 / CBS 732 / NBRC 1130 / NCYC 568 / NRRL Y-229)).